Here is a 959-residue protein sequence, read N- to C-terminus: Glycine dehydrogenase (decarboxylating) (959 aa).

Lys-707 is subject to N6-(pyridoxal phosphate)lysine.

It belongs to the GcvP family. In terms of assembly, the glycine cleavage system is composed of four proteins: P, T, L and H. Pyridoxal 5'-phosphate serves as cofactor.

The catalysed reaction is N(6)-[(R)-lipoyl]-L-lysyl-[glycine-cleavage complex H protein] + glycine + H(+) = N(6)-[(R)-S(8)-aminomethyldihydrolipoyl]-L-lysyl-[glycine-cleavage complex H protein] + CO2. In terms of biological role, the glycine cleavage system catalyzes the degradation of glycine. The P protein binds the alpha-amino group of glycine through its pyridoxal phosphate cofactor; CO(2) is released and the remaining methylamine moiety is then transferred to the lipoamide cofactor of the H protein. The chain is Glycine dehydrogenase (decarboxylating) from Photobacterium profundum (strain SS9).